The sequence spans 320 residues: o-succinylbenzoate synthase (320 aa).

Catalysis depends on Lys133, which acts as the Proton donor. 3 residues coordinate Mg(2+): Asp161, Glu190, and Asp213. Lys235 (proton acceptor) is an active-site residue.

This sequence belongs to the mandelate racemase/muconate lactonizing enzyme family. MenC type 1 subfamily. The cofactor is a divalent metal cation.

The enzyme catalyses (1R,6R)-6-hydroxy-2-succinyl-cyclohexa-2,4-diene-1-carboxylate = 2-succinylbenzoate + H2O. Its pathway is quinol/quinone metabolism; 1,4-dihydroxy-2-naphthoate biosynthesis; 1,4-dihydroxy-2-naphthoate from chorismate: step 4/7. The protein operates within quinol/quinone metabolism; menaquinone biosynthesis. Its function is as follows. Converts 2-succinyl-6-hydroxy-2,4-cyclohexadiene-1-carboxylate (SHCHC) to 2-succinylbenzoate (OSB). The polypeptide is o-succinylbenzoate synthase (Citrobacter koseri (strain ATCC BAA-895 / CDC 4225-83 / SGSC4696)).